A 347-amino-acid chain; its full sequence is MQGRVAGSCAPLGLLLVCLHLPGLFARSIGVVEEKVSQNLGTNLPQLGQPSSTGPSNSEHPQPALDPRSNDLARVPLKLSAPPSDGFPPAGGSAVQRWPPSWGLPAMDSWPPEDPWQMMAAAAEDRLGEALPEELSYLSSAVALAPGSGPLPGESSPDATGLSPEASLLHQDSESRRLPRSNSLGAGGKILSQRPPWSLIHRVLPDHPWGTLNPSVSWGGGGPGTGWGTRPMPHPEGIWGINNQPPGTSWGNINRYPGGSWGNINRYPGDSWGNNNRYPGGSWGNINRYPGGSWGNINRYPGGSWGNIHLYPGINNPFPPGVLRPPGSSWNIPAGFPNPPSPRLQWG.

The first 26 residues, 1 to 26 (MQGRVAGSCAPLGLLLVCLHLPGLFA), serve as a signal peptide directing secretion. Polar residues predominate over residues 41–60 (GTNLPQLGQPSSTGPSNSEH). Disordered regions lie at residues 41 to 110 (GTNL…MDSW) and 148 to 189 (SGPL…AGGK). Residues 148 to 157 (SGPLPGESSP) are compositionally biased toward low complexity.

In terms of assembly, binds to numerous extracellular matrix proteins.

The protein resides in the secreted. The protein localises to the extracellular space. It is found in the extracellular matrix. This is an uncharacterized protein from Pan troglodytes (Chimpanzee).